A 153-amino-acid polypeptide reads, in one-letter code: Jacalin-related lectin Calsepa (153 aa).

Ala2 is modified (N-acetylalanine). The 147-residue stretch at 6–152 (DTISGPWGNN…VDAIGTYNRH (147 aa)) folds into the Jacalin-type lectin domain. N-glycan binding regions lie at residues 17-18 (GN), 95-96 (DN), and 140-144 (GYYVD).

The protein belongs to the jacalin lectin family. In terms of assembly, homodimer. Not glycosylated. In terms of tissue distribution, rhizome (at protein level). Detected in the cortex and the pith of rhizome. Not detected in vascular tissues, pericycle, endodermis or rhizodermis.

The protein localises to the cytoplasm. Hemagglutinating activity is most inhibited by methyl alpha-mannopyranoside. This activity is inhibited to a less extent (about a third of the inhibition of that of methyl alpha-mannopyranoside) by methyl alpha-glucoside, other alpha-glucosides, such as maltose, isomaltose, panose or palatinose, and alpha-glucosides modified at the second position, such as methyl 2-deoxy-alpha-arabinoglucopyranoside or methyl 2-acetamido-2-deoxy alpha-glucopyranoside. Mildly inhibited by free monosaccharides, with glucose presenting at least 20-fold less inhibitory effect on hemagglutinating activity than mannose. Glycoproteins are somewhat inhibitory, the best being asialothyroglobulin and ovomucoid. Not inhibited by isomaltitol, sucrose or trehalose. Its function is as follows. Mannose-binding lectin. Preferentially binds mannose at concentrations ranging between 5 and 25 mM, but also binds glucose. Has a marked preference for methylated sugar derivatives, such as alpha-MeMan and alpha-MeGlc, at concentration down to 5 mM. Binds to N-glycans, but not to glycolipid-type or other type of glycans. Binds N-linked high-mannose-type glycans. Has a preference for smaller (Man(2)-Man(6)) high-mannose-type glycans to larger (Man(7)-Man(9)) ones. Recognizes both alpha1-6 extended and alpha1-3 extended monoantennary glycans. The addition of alpha1-2Man to the Man-alpha1-3Man-beta branch results in a significant loss of affinity, but beta1-2GlcNAc has some affinity. Has less affinity for biantennary glycans. However, affinity is significant for the biantennary complex-type N-glycans with bisecting GlcNAc. No affinity is observed for tri- and tetra-antennary glycans. Binds bisected glycans of the mouse brain. Selectively binds to bisecting N-glycans which are in back-fold conformation, and does not favor a glycan with an extend conformation. Has hemagglutinating activity against rabbit erythrocytes at 0.3 ug/ml and against trypsin-treated human erythrocytes at 5 ug/ml. Has mitogenic activity in murine cells. The polypeptide is Jacalin-related lectin Calsepa (Calystegia sepium (Hedge bindweed)).